A 382-amino-acid polypeptide reads, in one-letter code: S-adenosylmethionine decarboxylase proenzyme (382 aa).

Phe32 contacts substrate. Residues Glu33 and Glu36 contribute to the active site. A substrate-binding site is contributed by Leu87. Catalysis depends on Ser90, which acts as the Schiff-base intermediate with substrate; via pyruvic acid. Ser90 is modified (pyruvic acid (Ser); by autocatalysis). Cys104 functions as the Proton donor; for catalytic activity in the catalytic mechanism. Residue Phe248 coordinates substrate. Active-site proton acceptor; for processing activity residues include Ser254 and His267. Substrate is bound at residue Glu271.

Belongs to the eukaryotic AdoMetDC family. As to quaternary structure, heterotetramer of two alpha and two beta chains. Pyruvate is required as a cofactor. In terms of processing, is synthesized initially as an inactive proenzyme. Formation of the active enzyme involves a self-maturation process in which the active site pyruvoyl group is generated from an internal serine residue via an autocatalytic post-translational modification. Two non-identical subunits are generated from the proenzyme in this reaction, and the pyruvate is formed at the N-terminus of the alpha chain, which is derived from the carboxyl end of the proenzyme. The post-translation cleavage follows an unusual pathway, termed non-hydrolytic serinolysis, in which the side chain hydroxyl group of the serine supplies its oxygen atom to form the C-terminus of the beta chain, while the remainder of the serine residue undergoes an oxidative deamination to produce ammonia and the pyruvoyl group blocking the N-terminus of the alpha chain.

It catalyses the reaction S-adenosyl-L-methionine + H(+) = S-adenosyl 3-(methylsulfanyl)propylamine + CO2. It participates in amine and polyamine biosynthesis; S-adenosylmethioninamine biosynthesis; S-adenosylmethioninamine from S-adenosyl-L-methionine: step 1/1. The sequence is that of S-adenosylmethionine decarboxylase proenzyme from Leishmania donovani.